Consider the following 194-residue polypeptide: MEALKRKIEEEGVVLSDQVLKVDSFLNHQIDPLLMQRIGDEFASRFAKDGITKIVTIESSGIAPAVMTGLKLGVPVVFARKHKSLTLTDNLLTASVYSFTKQTESQIAVSGTHLSDQDHVLIIDDFLANGQAAHGLVSIVKQAGASIAGIGIVIEKSFQPGRDELVKLGYRVESLARIQSLEEGKVSFVQEVHS.

Xanthine-binding residues include Leu-20 and Asn-27. Residue 128–132 (ANGQA) participates in 5-phospho-alpha-D-ribose 1-diphosphate binding. Position 156 (Lys-156) interacts with xanthine.

This sequence belongs to the purine/pyrimidine phosphoribosyltransferase family. Xpt subfamily. In terms of assembly, homodimer.

The protein resides in the cytoplasm. It carries out the reaction XMP + diphosphate = xanthine + 5-phospho-alpha-D-ribose 1-diphosphate. It functions in the pathway purine metabolism; XMP biosynthesis via salvage pathway; XMP from xanthine: step 1/1. In terms of biological role, converts the preformed base xanthine, a product of nucleic acid breakdown, to xanthosine 5'-monophosphate (XMP), so that it can be reused for RNA or DNA synthesis. The protein is Xanthine phosphoribosyltransferase (xpt) of Bacillus subtilis (strain 168).